Reading from the N-terminus, the 760-residue chain is Catecholate siderophore receptor Fiu (760 aa).

The N-terminal stretch at 1 to 31 (MENNRNFPARQFHSLTFFAGLCIGITPVAQA) is a signal peptide. The TBDR plug domain occupies 67-175 (PVADTTRTMT…PTGSINMISK (109 aa)). Positions 180–760 (DSGIDASASI…TFLLTANMHF (581 aa)) constitute a TBDR beta-barrel domain. Residues 743–760 (RYHPGEPRTFLLTANMHF) carry the TonB C-terminal box motif.

This sequence belongs to the TonB-dependent receptor family.

The protein resides in the cell outer membrane. Its function is as follows. Involved in the active transport across the outer membrane of iron complexed with catecholate siderophores such as dihydroxybenzoylserine and dihydroxybenzoate. It derives its energy for transport by interacting with the trans-periplasmic membrane protein TonB. Can also transport catechol-substituted cephalosporins. Receptor for microcins M, H47 and E492. This Escherichia coli (strain UTI89 / UPEC) protein is Catecholate siderophore receptor Fiu (fiu).